A 2104-amino-acid chain; its full sequence is Phenolphthiocerol synthesis polyketide synthase type I Pks15/1 (2104 aa).

Residues 41 to 464 enclose the Ketosynthase family 3 (KS3) domain; that stretch reads TEPVAVVGIG…GTNAHVILEE (424 aa). Active-site for beta-ketoacyl synthase activity residues include C211, H346, and H386. Residues 571–887 are acyltransferase; that stretch reads TAVVFPGQGS…GQLFSTGMSV (317 aa). The active-site For acyltransferase activity is S662. Positions 935 to 1057 are N-terminal hotdog fold; the sequence is HALLGAVVER…GMLGVEAASS (123 aa). The dehydratase stretch occupies residues 935–1095; the sequence is HALLGAVVER…YAYGPGFQGL (161 aa). In terms of domain architecture, PKS/mFAS DH spans 935–1207; that stretch reads HALLGAVVER…TRAMSAAQLR (273 aa). H967 acts as the Proton acceptor; for dehydratase activity in catalysis. Residues 1069–1207 form a C-terminal hotdog fold region; it reads AESVDISDGY…TRAMSAAQLR (139 aa). D1128 functions as the Proton donor; for dehydratase activity in the catalytic mechanism. The interval 1400-1705 is enoylreductase; sequence GTLEDLVIEP…QARHIGKVVL (306 aa). Residues 1530–1547 and 1719–1734 contribute to the NADP(+) site; these read VLIHAGTGGVGMAAVQLA and TVLITGATGAVGAVLA. Positions 1718 to 1899 are beta-ketoacyl reductase (KR); it reads ATVLITGATG…SVAWGLWEQS (182 aa). Residues 2004 to 2079 enclose the Carrier domain; that stretch reads DALVGLVCLQ…AIAEYVGRQI (76 aa). S2039 bears the O-(pantetheine 4'-phosphoryl)serine mark. Residues 2081 to 2104 are disordered; the sequence is DSQATQAEEEKLPESDGEMVSVTA.

Belongs to the thiolase-like superfamily. Beta-ketoacyl-ACP synthases family. Requires pantetheine 4'-phosphate as cofactor.

The catalysed reaction is a fatty acyl-[ACP] + malonyl-[ACP] + H(+) = a 3-oxoacyl-[ACP] + holo-[ACP] + CO2. The protein operates within lipid metabolism; fatty acid biosynthesis. Catalyzes the elongation by iterative transfer of p-hydroxybenzoyl group from FadD22 (pHBA-S-FAdD22) to form p-hydroxyphenylalkanoate (pHPA) intermediates during phenolphthiocerol (PPOL) biosynthesis. PPOL is an important intermediate in the biosynthesis of phenolic glycolipid (mycosid B). This is Phenolphthiocerol synthesis polyketide synthase type I Pks15/1 (pks15/1) from Mycobacterium marinum (strain ATCC BAA-535 / M).